We begin with the raw amino-acid sequence, 421 residues long: Voltage-dependent calcium channel gamma-8 subunit (421 aa).

The next 4 membrane-spanning stretches (helical) occupy residues 19–39, 127–147, 157–177, and 207–227; these read VQVL…TIAI, SSIF…CVAA, IILG…IGVI, and FGGL…NIYI. Phosphoserine is present on residues serine 251 and serine 254. Residues 271-304 form a disordered region; the sequence is RRSRSSSRGSSEASPSRDASPGGPGGPGFASTDI. Over residues 276 to 287 the composition is skewed to low complexity; it reads SSRGSSEASPSR. Residues 318–338 traverse the membrane as a helical segment; that stretch reads VAAGLASAGGGGGGAGVGAYG. Disordered stretches follow at residues 342-363 and 378-421; these read GAAG…GFLT and VTVT…TTPV. Over residues 384–397 the composition is skewed to pro residues; the sequence is PAAPAPAPPAPAAP. Residues 408–421 are compositionally biased toward polar residues; the sequence is ASNTNTLNRKTTPV.

It belongs to the PMP-22/EMP/MP20 family. CACNG subfamily. In terms of assembly, interacts with CACNA1C. Identified in a complex with the L-type calcium channel subunits CACNA1C, CACNA2D1 and either CACNB1 or CACNB2. Acts as an auxiliary subunit for AMPA-selective glutamate receptors (AMPARs). Found in a complex with GRIA1, GRIA2, GRIA3, GRIA4, CNIH2, CNIH3, CACNG2, CACNG3, CACNG4, CACNG5 and CACNG7. Interacts with CNIH2. Found in a complex with GRIA1, GRIA2, GRIA3, GRIA4, DLG4 and CNIH2. In terms of processing, palmitoylated. Probably palmitoylated by ZDHHC3 and ZDHHC7.

The protein resides in the cell membrane. It is found in the postsynaptic density membrane. Regulates the activity of L-type calcium channels that contain CACNA1C as pore-forming subunit. Regulates the trafficking and gating properties of AMPA-selective glutamate receptors (AMPARs). Promotes their targeting to the cell membrane and synapses and modulates their gating properties by slowing their rates of activation, deactivation and desensitization and by mediating their resensitization. Does not show subunit-specific AMPA receptor regulation and regulates all AMPAR subunits. Thought to stabilize the calcium channel in an inactivated (closed) state. This chain is Voltage-dependent calcium channel gamma-8 subunit, found in Rattus norvegicus (Rat).